Here is a 276-residue protein sequence, read N- to C-terminus: Ribosomal RNA small subunit methyltransferase A (276 aa).

Residues His-15, Leu-17, Gly-42, Glu-64, Asp-89, and Asn-108 each contribute to the S-adenosyl-L-methionine site.

It belongs to the class I-like SAM-binding methyltransferase superfamily. rRNA adenine N(6)-methyltransferase family. RsmA subfamily.

Its subcellular location is the cytoplasm. It catalyses the reaction adenosine(1518)/adenosine(1519) in 16S rRNA + 4 S-adenosyl-L-methionine = N(6)-dimethyladenosine(1518)/N(6)-dimethyladenosine(1519) in 16S rRNA + 4 S-adenosyl-L-homocysteine + 4 H(+). Its function is as follows. Specifically dimethylates two adjacent adenosines (A1518 and A1519) in the loop of a conserved hairpin near the 3'-end of 16S rRNA in the 30S particle. May play a critical role in biogenesis of 30S subunits. The chain is Ribosomal RNA small subunit methyltransferase A from Prochlorococcus marinus (strain MIT 9515).